A 485-amino-acid polypeptide reads, in one-letter code: Cobyric acid synthase (485 aa).

In terms of domain architecture, GATase cobBQ-type spans 248–435 (VLKVVVPVLP…LHGLFESPDA (188 aa)). Cys-329 (nucleophile) is an active-site residue. Residue His-427 is part of the active site.

The protein belongs to the CobB/CobQ family. CobQ subfamily.

The protein operates within cofactor biosynthesis; adenosylcobalamin biosynthesis. Functionally, catalyzes amidations at positions B, D, E, and G on adenosylcobyrinic A,C-diamide. NH(2) groups are provided by glutamine, and one molecule of ATP is hydrogenolyzed for each amidation. The polypeptide is Cobyric acid synthase (Stutzerimonas stutzeri (strain A1501) (Pseudomonas stutzeri)).